Here is a 191-residue protein sequence, read N- to C-terminus: Large ribosomal subunit protein uL5 (191 aa).

It belongs to the universal ribosomal protein uL5 family. As to quaternary structure, part of the 50S ribosomal subunit; part of the 5S rRNA/L5/L18/L25 subcomplex. Contacts the 5S rRNA and the P site tRNA. Forms a bridge to the 30S subunit in the 70S ribosome.

Its function is as follows. This is one of the proteins that bind and probably mediate the attachment of the 5S RNA into the large ribosomal subunit, where it forms part of the central protuberance. In the 70S ribosome it contacts protein S13 of the 30S subunit (bridge B1b), connecting the 2 subunits; this bridge is implicated in subunit movement. Contacts the P site tRNA; the 5S rRNA and some of its associated proteins might help stabilize positioning of ribosome-bound tRNAs. The polypeptide is Large ribosomal subunit protein uL5 (Corynebacterium glutamicum (strain R)).